Reading from the N-terminus, the 116-residue chain is Probable early E4 11 kDa protein (116 aa).

The polypeptide is Probable early E4 11 kDa protein (Human adenovirus A serotype 12 (HAdV-12)).